A 770-amino-acid polypeptide reads, in one-letter code: Lysine-specific histone demethylase 1 (770 aa).

The segment at 1–21 (MSSDTGSEYLDEEIRGDELGP) is disordered. Residues 28 to 126 (LAAAASAARL…FGRYVRSTKI (99 aa)) form the SWIRM domain. Residue 137 to 165 (VIVIGAGAAGISAATQLESFGFDVIVLEA) participates in FAD binding. The disordered stretch occupies residues 718-739 (NEAVADIPNAPNAPNAQKPEEI).

It belongs to the flavin monoamine oxidase family. As to quaternary structure, probably part of a large repressor complex. Interacts with CoREST protein spr-1. Interacts with chromobox protein homolog hpl-1. FAD is required as a cofactor.

The protein resides in the nucleus. It catalyses the reaction N(6),N(6)-dimethyl-L-lysyl(4)-[histone H3] + 2 A + 2 H2O = L-lysyl(4)-[histone H3] + 2 formaldehyde + 2 AH2. Its function is as follows. Histone demethylase that specifically demethylates 'Lys-4' of histone H3, a specific tag for epigenetic transcriptional activation, thereby acting as a corepressor. Acts by oxidizing the substrate by FAD to generate the corresponding imine that is subsequently hydrolyzed. Demethylates both mono- and di-methylated 'Lys-4' of histone H3. May be involved in H3 demethylation in mitotic cells including gut and embryonic cells. Participates in the transcriptional repression of the presenilin protein hop-1. May act via the formation of a multiprotein complex that remodel or modify the chromatin. Together with met-2, set-17 and set-26, required for transgenerational fertility. Plays a role in developmental growth and lifespan regulation in response to ultraviolet-induced damage. The polypeptide is Lysine-specific histone demethylase 1 (Caenorhabditis elegans).